We begin with the raw amino-acid sequence, 318 residues long: Formimidoylglutamase (318 aa).

Mn(2+)-binding residues include His124, Asp153, His155, Asp157, Cys241, and Asp243.

Belongs to the arginase family. It depends on Mn(2+) as a cofactor.

The enzyme catalyses N-formimidoyl-L-glutamate + H2O = formamide + L-glutamate. It participates in amino-acid degradation; L-histidine degradation into L-glutamate; L-glutamate from N-formimidoyl-L-glutamate (hydrolase route): step 1/1. Functionally, catalyzes the conversion of N-formimidoyl-L-glutamate to L-glutamate and formamide. The chain is Formimidoylglutamase from Fusobacterium nucleatum subsp. nucleatum (strain ATCC 25586 / DSM 15643 / BCRC 10681 / CIP 101130 / JCM 8532 / KCTC 2640 / LMG 13131 / VPI 4355).